We begin with the raw amino-acid sequence, 408 residues long: LysM domain-containing protein ARB_01488 (408 aa).

Positions 1-17 (MVKYALLPLVAVSLVQA) are cleaved as a signal peptide. One can recognise a LysM 1 domain in the interval 42-91 (SWINVVDASGKLTCDAFLDTINVAKRQFIFWNPQLNSDCSNIQSKASYCA). The interval 98–178 (SKQTRGQMDP…HGPKEAPPPD (81 aa)) is disordered. Over residues 106-116 (DPPPKTKPLPP) the composition is skewed to pro residues. 2 LysM domains span residues 270–320 (QYHT…RVCV) and 360–406 (SFEL…YACV).

It localises to the secreted. Its function is as follows. Might have a role in sequestration of chitin oligosaccharides (breakdown products of fungal cell walls that are released during invasion and act as triggers of host immunity) to dampen host defense. The polypeptide is LysM domain-containing protein ARB_01488 (Arthroderma benhamiae (strain ATCC MYA-4681 / CBS 112371) (Trichophyton mentagrophytes)).